A 77-amino-acid chain; its full sequence is MKEQKWTHEGLITESLPNGMFRVRLDNEDLILGYVSGKIRRSFIRILPGDRVKIEVSRYDSTRGRIIYRLRNKDSKD.

Positions 1-71 (MKEQKWTHEG…TRGRIIYRLR (71 aa)) constitute an S1-like domain.

This sequence belongs to the IF-1 family. As to quaternary structure, component of the 30S ribosomal translation pre-initiation complex which assembles on the 30S ribosome in the order IF-2 and IF-3, IF-1 and N-formylmethionyl-tRNA(fMet); mRNA recruitment can occur at any time during PIC assembly.

The protein localises to the plastid. It localises to the chloroplast. Functionally, one of the essential components for the initiation of protein synthesis. Stabilizes the binding of IF-2 and IF-3 on the 30S subunit to which N-formylmethionyl-tRNA(fMet) subsequently binds. Helps modulate mRNA selection, yielding the 30S pre-initiation complex (PIC). Upon addition of the 50S ribosomal subunit IF-1, IF-2 and IF-3 are released leaving the mature 70S translation initiation complex. The sequence is that of Translation initiation factor IF-1, chloroplastic from Coffea arabica (Arabian coffee).